A 468-amino-acid polypeptide reads, in one-letter code: Kynureninase 2 (468 aa).

Pyridoxal 5'-phosphate-binding positions include L134, T135, 162–165 (FPSD), D247, H250, and Y272. At K273 the chain carries N6-(pyridoxal phosphate)lysine. Residues W312 and N340 each contribute to the pyridoxal 5'-phosphate site.

The protein belongs to the kynureninase family. In terms of assembly, homodimer. Pyridoxal 5'-phosphate is required as a cofactor.

It localises to the cytoplasm. The catalysed reaction is L-kynurenine + H2O = anthranilate + L-alanine + H(+). It carries out the reaction 3-hydroxy-L-kynurenine + H2O = 3-hydroxyanthranilate + L-alanine + H(+). Its pathway is amino-acid degradation; L-kynurenine degradation; L-alanine and anthranilate from L-kynurenine: step 1/1. The protein operates within cofactor biosynthesis; NAD(+) biosynthesis; quinolinate from L-kynurenine: step 2/3. Catalyzes the cleavage of L-kynurenine (L-Kyn) and L-3-hydroxykynurenine (L-3OHKyn) into anthranilic acid (AA) and 3-hydroxyanthranilic acid (3-OHAA), respectively. This Aspergillus oryzae (strain ATCC 42149 / RIB 40) (Yellow koji mold) protein is Kynureninase 2 (bna5-2).